A 625-amino-acid polypeptide reads, in one-letter code: Mesothelin (625 aa).

A signal peptide spans 1–35 (MALPTARPLLGSCGSPICSRSFLLLLLSLGWIPRL). Asn93 carries an N-linked (GlcNAc...) asparagine glycan. Ser202 bears the Phosphoserine mark. A disulfide bridge links Cys304 with Cys328. 3 N-linked (GlcNAc...) asparagine glycosylation sites follow: Asn390, Asn488, and Asn517. Ser600 carries the GPI-anchor amidated serine lipid modification. The propeptide at 601–625 (SRASLLGPGFVLIWIPALLPALRLS) is removed in mature form.

Belongs to the mesothelin family. Interacts with MUC16. Post-translationally, proteolytically cleaved by a furin-like convertase to generate megakaryocyte-potentiating factor (MPF), and the cleaved form of mesothelin. As to expression, highly expressed in lung and heart. Expressed at low levels in spleen, liver, kidney and testis. Present in lung (at protein level).

The protein localises to the cell membrane. Its subcellular location is the golgi apparatus. The protein resides in the secreted. Functionally, membrane-anchored forms may play a role in cellular adhesion. Megakaryocyte-potentiating factor (MPF) may potentiate megakaryocyte colony formation. This chain is Mesothelin (Msln), found in Mus musculus (Mouse).